The sequence spans 297 residues: 4-hydroxy-tetrahydrodipicolinate synthase (297 aa).

Thr50 contributes to the pyruvate binding site. The active-site Proton donor/acceptor is Tyr138. Lys166 (schiff-base intermediate with substrate) is an active-site residue. Ile208 lines the pyruvate pocket.

This sequence belongs to the DapA family. As to quaternary structure, homotetramer; dimer of dimers.

Its subcellular location is the cytoplasm. The enzyme catalyses L-aspartate 4-semialdehyde + pyruvate = (2S,4S)-4-hydroxy-2,3,4,5-tetrahydrodipicolinate + H2O + H(+). The protein operates within amino-acid biosynthesis; L-lysine biosynthesis via DAP pathway; (S)-tetrahydrodipicolinate from L-aspartate: step 3/4. Its function is as follows. Catalyzes the condensation of (S)-aspartate-beta-semialdehyde [(S)-ASA] and pyruvate to 4-hydroxy-tetrahydrodipicolinate (HTPA). The protein is 4-hydroxy-tetrahydrodipicolinate synthase of Desulfotalea psychrophila (strain LSv54 / DSM 12343).